A 274-amino-acid polypeptide reads, in one-letter code: 2,3,4,5-tetrahydropyridine-2,6-dicarboxylate N-succinyltransferase (274 aa).

Substrate is bound by residues R104 and D141.

The protein belongs to the transferase hexapeptide repeat family. Homotrimer.

The protein localises to the cytoplasm. The enzyme catalyses (S)-2,3,4,5-tetrahydrodipicolinate + succinyl-CoA + H2O = (S)-2-succinylamino-6-oxoheptanedioate + CoA. The protein operates within amino-acid biosynthesis; L-lysine biosynthesis via DAP pathway; LL-2,6-diaminopimelate from (S)-tetrahydrodipicolinate (succinylase route): step 1/3. With respect to regulation, inhibited by p-(chloromercuri)benzenesulfonic acid and cobalt. The sequence is that of 2,3,4,5-tetrahydropyridine-2,6-dicarboxylate N-succinyltransferase (dapD) from Unknown prokaryotic organism.